The sequence spans 147 residues: HTH-type transcriptional regulator MntR (147 aa).

In terms of domain architecture, HTH dtxR-type spans 1–63 (MPTPSMEDYI…YEKYRGFVLT (63 aa)). Residues aspartate 8, glutamate 11, histidine 77, glutamate 99, glutamate 102, and histidine 103 each contribute to the Mn(2+) site.

Belongs to the DtxR/MntR family. As to quaternary structure, homodimer.

Its subcellular location is the cytoplasm. With respect to regulation, DNA binding is strongly activated by Mn(2+). Central regulator of manganese homeostasis. This Oceanobacillus iheyensis (strain DSM 14371 / CIP 107618 / JCM 11309 / KCTC 3954 / HTE831) protein is HTH-type transcriptional regulator MntR.